The chain runs to 156 residues: Small ribosomal subunit protein uS7 (156 aa).

The protein belongs to the universal ribosomal protein uS7 family. Part of the 30S ribosomal subunit. Contacts proteins S9 and S11.

In terms of biological role, one of the primary rRNA binding proteins, it binds directly to 16S rRNA where it nucleates assembly of the head domain of the 30S subunit. Is located at the subunit interface close to the decoding center, probably blocks exit of the E-site tRNA. This is Small ribosomal subunit protein uS7 from Campylobacter curvus (strain 525.92).